An 874-amino-acid polypeptide reads, in one-letter code: Leucine--tRNA ligase (874 aa).

Residues 47-57 (PYPSGKLHMGH) carry the 'HIGH' region motif. The short motif at 636-640 (KMSKS) is the 'KMSKS' region element. Residue lysine 639 participates in ATP binding.

This sequence belongs to the class-I aminoacyl-tRNA synthetase family.

It is found in the cytoplasm. The enzyme catalyses tRNA(Leu) + L-leucine + ATP = L-leucyl-tRNA(Leu) + AMP + diphosphate. This is Leucine--tRNA ligase from Acinetobacter baumannii (strain AB307-0294).